The sequence spans 351 residues: Histidinol-phosphate aminotransferase (351 aa).

Residue K213 is modified to N6-(pyridoxal phosphate)lysine.

The protein belongs to the class-II pyridoxal-phosphate-dependent aminotransferase family. Histidinol-phosphate aminotransferase subfamily. As to quaternary structure, homodimer. Requires pyridoxal 5'-phosphate as cofactor.

The catalysed reaction is L-histidinol phosphate + 2-oxoglutarate = 3-(imidazol-4-yl)-2-oxopropyl phosphate + L-glutamate. It functions in the pathway amino-acid biosynthesis; L-histidine biosynthesis; L-histidine from 5-phospho-alpha-D-ribose 1-diphosphate: step 7/9. This Thermoanaerobacter sp. (strain X514) protein is Histidinol-phosphate aminotransferase.